The following is a 328-amino-acid chain: MPKRPVLAVTAGEPAGIGPDLVLRLPELAPEARCVAIADHALLADRAAALGLNLELADYRRDRPAPAGALEVLHVPLAAPAQAGRLDPANGRYVLATLDAAIDGCVSGEFAAMVTAPVHKGVINDAGVPFTGHTEYLAERTGTGKVVMMLAGGGMRVALATTHLPLREVADAITAPLLNEVIRILHADLENKFGIDAPRILVAGLNPHAGEGGHMGREEIDVIEPALDALRAEGINLIGPLPADTLFNPDKLAAADAVLAMYHDQGLPVLKHASFGAGINVTLGLPIVRTSVDHGTALDLAGSGRADPGSLLEAVRLAEQLAGHAGRR.

Residues H133 and T134 each contribute to the substrate site. Residues H163, H208, and H263 each contribute to the a divalent metal cation site. K271, N280, and R289 together coordinate substrate.

Belongs to the PdxA family. As to quaternary structure, homodimer. Requires Zn(2+) as cofactor. The cofactor is Mg(2+). Co(2+) is required as a cofactor.

It is found in the cytoplasm. The enzyme catalyses 4-(phosphooxy)-L-threonine + NAD(+) = 3-amino-2-oxopropyl phosphate + CO2 + NADH. It participates in cofactor biosynthesis; pyridoxine 5'-phosphate biosynthesis; pyridoxine 5'-phosphate from D-erythrose 4-phosphate: step 4/5. Catalyzes the NAD(P)-dependent oxidation of 4-(phosphooxy)-L-threonine (HTP) into 2-amino-3-oxo-4-(phosphooxy)butyric acid which spontaneously decarboxylates to form 3-amino-2-oxopropyl phosphate (AHAP). This chain is 4-hydroxythreonine-4-phosphate dehydrogenase, found in Chromobacterium violaceum (strain ATCC 12472 / DSM 30191 / JCM 1249 / CCUG 213 / NBRC 12614 / NCIMB 9131 / NCTC 9757 / MK).